A 233-amino-acid chain; its full sequence is Thymidylate kinase (233 aa).

Position 10–17 (10–17) interacts with ATP; sequence GVDGVGKT.

This sequence belongs to the thymidylate kinase family.

The enzyme catalyses dTMP + ATP = dTDP + ADP. Phosphorylation of dTMP to form dTDP in both de novo and salvage pathways of dTTP synthesis. The sequence is that of Thymidylate kinase from Bifidobacterium longum subsp. infantis (strain ATCC 15697 / DSM 20088 / JCM 1222 / NCTC 11817 / S12).